The following is a 50-amino-acid chain: Protein PndA (50 aa).

Residues 5 to 25 (TFLMMLIVICVTILCFVWMVR) traverse the membrane as a helical segment.

This sequence belongs to the Hok/Gef family.

The protein localises to the cell inner membrane. Toxic component of a type I toxin-antitoxin (TA) system. When expressed is involved in cellular Mg(2+) release and degradation of stable RNA. This is Protein PndA (pndA) from Escherichia coli.